The sequence spans 235 residues: Small ribosomal subunit protein uS2c (235 aa).

It belongs to the universal ribosomal protein uS2 family.

It is found in the plastid. The protein localises to the chloroplast. In Marchantia polymorpha (Common liverwort), this protein is Small ribosomal subunit protein uS2c (rps2).